The sequence spans 418 residues: Serine hydroxymethyltransferase (418 aa).

(6S)-5,6,7,8-tetrahydrofolate is bound by residues leucine 121 and 125-127; that span reads GHL. Residue lysine 230 is modified to N6-(pyridoxal phosphate)lysine. (6S)-5,6,7,8-tetrahydrofolate is bound at residue 355-357; that stretch reads SPF.

Belongs to the SHMT family. In terms of assembly, homodimer. Pyridoxal 5'-phosphate is required as a cofactor.

It localises to the cytoplasm. The enzyme catalyses (6R)-5,10-methylene-5,6,7,8-tetrahydrofolate + glycine + H2O = (6S)-5,6,7,8-tetrahydrofolate + L-serine. Its pathway is one-carbon metabolism; tetrahydrofolate interconversion. The protein operates within amino-acid biosynthesis; glycine biosynthesis; glycine from L-serine: step 1/1. Its function is as follows. Catalyzes the reversible interconversion of serine and glycine with tetrahydrofolate (THF) serving as the one-carbon carrier. This reaction serves as the major source of one-carbon groups required for the biosynthesis of purines, thymidylate, methionine, and other important biomolecules. Also exhibits THF-independent aldolase activity toward beta-hydroxyamino acids, producing glycine and aldehydes, via a retro-aldol mechanism. The sequence is that of Serine hydroxymethyltransferase from Streptococcus pyogenes serotype M49 (strain NZ131).